The primary structure comprises 119 residues: Ribonuclease P protein component (119 aa).

Belongs to the RnpA family. As to quaternary structure, consists of a catalytic RNA component (M1 or rnpB) and a protein subunit.

It catalyses the reaction Endonucleolytic cleavage of RNA, removing 5'-extranucleotides from tRNA precursor.. In terms of biological role, RNaseP catalyzes the removal of the 5'-leader sequence from pre-tRNA to produce the mature 5'-terminus. It can also cleave other RNA substrates such as 4.5S RNA. The protein component plays an auxiliary but essential role in vivo by binding to the 5'-leader sequence and broadening the substrate specificity of the ribozyme. The chain is Ribonuclease P protein component from Histophilus somni (strain 129Pt) (Haemophilus somnus).